A 402-amino-acid chain; its full sequence is Multidrug resistance protein MdtH (402 aa).

The Cytoplasmic portion of the chain corresponds to 1-12; that stretch reads MSRVSQARNLGK. The chain crosses the membrane as a helical span at residues 13–33; sequence YFLLIDNMLVVLGFFVVFPLI. Residues 34-98 lie on the Periplasmic side of the membrane; that stretch reads SIRFVDQMGW…GFATMGIAHE (65 aa). Residues 99 to 116 form a helical membrane-spanning segment; it reads PWLLWFSCFLSGLGGTLF. Residues 117-138 are Cytoplasmic-facing; sequence DPPRSALVVKLIRPEQRGRFFS. Residues 139–159 form a helical membrane-spanning segment; it reads LLMMQDSAGAVIGALLGSWLL. The Periplasmic segment spans residues 160–164; that stretch reads QYDFR. A helical membrane pass occupies residues 165–185; the sequence is LVCATGAILFILCALFNAWLL. Over 186–213 the chain is Cytoplasmic; the sequence is PAWKLSTVRTPVREGMRRVMSDKRFVTY. A helical transmembrane segment spans residues 214–234; the sequence is VLTLAGYYMLAVQVMLMLPIM. Topologically, residues 235 to 243 are periplasmic; that stretch reads VNDIAGSPA. A helical transmembrane segment spans residues 244-264; the sequence is AVKWMYAIEACLSLTLLYPIA. Residues 265-276 are Cytoplasmic-facing; sequence RWSEKRFRLEHR. Residues 277–297 traverse the membrane as a helical segment; that stretch reads LMAGLLVMSLSMIPIGMVGNL. Residues 298–299 lie on the Periplasmic side of the membrane; sequence QQ. The helical transmembrane segment at 300-320 threads the bilayer; the sequence is LFTLICAFYIGSVIAEPARET. Topologically, residues 321–339 are cytoplasmic; it reads LSASLADARARGSYMGFSR. A helical transmembrane segment spans residues 340–360; sequence LGLAIGGAIGYIGGGWLFDMG. At 361–367 the chain is on the periplasmic side; that stretch reads KALTQPE. Residues 368–388 traverse the membrane as a helical segment; it reads LPWMMLGIIGFITFLALGWQF. Residues 389-402 are Cytoplasmic-facing; sequence SHKRTPRRMLEPGA.

Belongs to the major facilitator superfamily. DHA1 family. MdtH (TC 2.A.1.2.21) subfamily.

It localises to the cell inner membrane. The protein is Multidrug resistance protein MdtH of Salmonella paratyphi B (strain ATCC BAA-1250 / SPB7).